Here is a 65-residue protein sequence, read N- to C-terminus: Antitoxin VapB32 (65 aa).

The interval 46 to 65 (ALGGTDPQATAAPRRRTSPR) is disordered.

Its function is as follows. Antitoxin component of a type II toxin-antitoxin (TA) system. The chain is Antitoxin VapB32 (vapB32) from Mycobacterium tuberculosis (strain CDC 1551 / Oshkosh).